Consider the following 125-residue polypeptide: MLFYHCSSFSSSSSSSSSSASTRRLPFGHSWGTWSTDMCSLGCTVYLGKGDTNSKSNSSLPRSRSNEVSSLLMMWPSSSIVVAVAVSSCPSLKQSISSSADNCLILSWRALDHSAGSLEYTARYM.

Residues 1–21 (MLFYHCSSFSSSSSSSSSSAS) are disordered. Residues 7 to 21 (SSFSSSSSSSSSSAS) show a composition bias toward low complexity.

This is an uncharacterized protein from Saccharomyces cerevisiae (strain ATCC 204508 / S288c) (Baker's yeast).